Reading from the N-terminus, the 334-residue chain is Ornithine carbamoyltransferase (334 aa).

Residues 56–59, Gln-83, Arg-107, and 134–137 contribute to the carbamoyl phosphate site; these read STRT and HPTQ. Residues Asn-168, Asp-232, and 236 to 237 each bind L-ornithine; that span reads SM. Carbamoyl phosphate-binding positions include 274-275 and Arg-320; that span reads CL.

This sequence belongs to the aspartate/ornithine carbamoyltransferase superfamily. OTCase family.

The protein localises to the cytoplasm. It carries out the reaction carbamoyl phosphate + L-ornithine = L-citrulline + phosphate + H(+). Its pathway is amino-acid biosynthesis; L-arginine biosynthesis; L-arginine from L-ornithine and carbamoyl phosphate: step 1/3. Functionally, reversibly catalyzes the transfer of the carbamoyl group from carbamoyl phosphate (CP) to the N(epsilon) atom of ornithine (ORN) to produce L-citrulline. The protein is Ornithine carbamoyltransferase of Shigella dysenteriae serotype 1 (strain Sd197).